A 147-amino-acid polypeptide reads, in one-letter code: Ribosome-binding factor A (147 aa).

A disordered region spans residues 127-147 (AAEARHAGEPDPYKTDRDDAE).

It belongs to the RbfA family. In terms of assembly, monomer. Binds 30S ribosomal subunits, but not 50S ribosomal subunits or 70S ribosomes.

It is found in the cytoplasm. Functionally, one of several proteins that assist in the late maturation steps of the functional core of the 30S ribosomal subunit. Associates with free 30S ribosomal subunits (but not with 30S subunits that are part of 70S ribosomes or polysomes). Required for efficient processing of 16S rRNA. May interact with the 5'-terminal helix region of 16S rRNA. In Nocardia farcinica (strain IFM 10152), this protein is Ribosome-binding factor A.